Reading from the N-terminus, the 636-residue chain is Chaperone protein DnaK (636 aa).

At T198 the chain carries Phosphothreonine; by autocatalysis. Residues 602–636 are disordered; that stretch reads QAEGAQPGGEAAGEASAKDEKVVDADFEEVKDDKK. Residues 626–636 are compositionally biased toward acidic residues; sequence ADFEEVKDDKK.

The protein belongs to the heat shock protein 70 family.

Functionally, acts as a chaperone. The chain is Chaperone protein DnaK from Geobacter sulfurreducens (strain ATCC 51573 / DSM 12127 / PCA).